The following is a 92-amino-acid chain: Long neurotoxin 3FTx-Oxy2 (92 aa).

A signal peptide spans 1–21 (MKTLLLTLVVVTIVCLDLGYT). 4 cysteine pairs are disulfide-bonded: cysteine 24-cysteine 42, cysteine 35-cysteine 63, cysteine 67-cysteine 79, and cysteine 80-cysteine 85.

It belongs to the three-finger toxin family. Long-chain subfamily. Type II alpha-neurotoxin sub-subfamily. As to expression, expressed by the venom gland.

It localises to the secreted. Its function is as follows. Binds with high affinity to muscular (alpha-1/CHRNA1) and neuronal (alpha-7/CHRNA7) nicotinic acetylcholine receptor (nAChR) and inhibits acetylcholine from binding to the receptor, thereby impairing neuromuscular and neuronal transmission. The chain is Long neurotoxin 3FTx-Oxy2 from Oxyuranus microlepidotus (Inland taipan).